Consider the following 245-residue polypeptide: Uridylate kinase (245 aa).

12-15 lines the ATP pocket; that stretch reads KISG. G55 is a UMP binding site. Residues G56 and R60 each coordinate ATP. UMP contacts are provided by residues D76 and 137–144; that span reads AGAPYLTT. 3 residues coordinate ATP: T164, Y171, and D174.

This sequence belongs to the UMP kinase family. Homohexamer.

Its subcellular location is the cytoplasm. The enzyme catalyses UMP + ATP = UDP + ADP. It participates in pyrimidine metabolism; CTP biosynthesis via de novo pathway; UDP from UMP (UMPK route): step 1/1. Its activity is regulated as follows. Inhibited by UTP. Catalyzes the reversible phosphorylation of UMP to UDP. In Chlamydia trachomatis serovar D (strain ATCC VR-885 / DSM 19411 / UW-3/Cx), this protein is Uridylate kinase.